A 1967-amino-acid polypeptide reads, in one-letter code: RQC trigger complex helicase SLH1 (1967 aa).

Residues 297–485 enclose the Helicase ATP-binding 1 domain; it reads PVAYKTNENM…FLGVNRQIGM (189 aa). 310–317 is a binding site for ATP; sequence APTGAGKT. The DEVH box motif lies at 427–430; it reads DEVH. Residues 516-735 form the Helicase C-terminal 1 domain; sequence NIDKVAYDKL…NVDEAIEWLG (220 aa). In terms of domain architecture, SEC63 1 spans 795 to 1100; that stretch reads AKDLGRVSSD…GCESTHAISF (306 aa). The Helicase ATP-binding 2 domain occupies 1149 to 1324; that stretch reads YTLYNTNENA…WLGVKDHGLY (176 aa). Position 1162–1169 (1162–1169) interacts with ATP; sequence SPTGSGKT. Positions 1266–1269 match the DEAH box motif; it reads DEIH. Residues 1355–1550 form the Helicase C-terminal 2 domain; it reads MNKPVFMAIK…SLHKVLDDHL (196 aa). The SEC63 2 domain maps to 1626 to 1776; sequence ATPFLSISSY…MMQCIKQGYW (151 aa).

This sequence belongs to the helicase family. SKI2 subfamily. In terms of assembly, component of the RQT (ribosome quality control trigger) complex, composed of SLH1, CUE3, and RQT4. Interacts with CUE3. Interacts with RQT4. Interacts with HEL2. Associates with translating ribosomes.

It is found in the cytoplasm. The protein resides in the cytosol. It catalyses the reaction ATP + H2O = ADP + phosphate + H(+). In terms of biological role, involved in activation of the ribosome quality control (RQC) pathway, a pathway that degrades nascent peptide chains during problematic translation. Drives the splitting of stalled ribosomes that are polyubiquitinated in a HEL2-dependent manner, as part of the ribosome quality control trigger (RQT) complex. Also represses the translation of non-poly(A) mRNAs together with SKI2. May block translation by inhibiting translation initiation factor 5B (FUN12) action on mRNAs lacking a 3' poly(A) structure. Involved in antiviral defense, preventing L-A dsRNA virus propagation by specifically blocking translation of viral mRNAs. The polypeptide is RQC trigger complex helicase SLH1 (Saccharomyces cerevisiae (strain ATCC 204508 / S288c) (Baker's yeast)).